Reading from the N-terminus, the 275-residue chain is Nuclear egress protein 2 (275 aa).

Topologically, residues 1–251 (MAGLGKPYTG…GLKHLRIGPP (251 aa)) are perinuclear space. Residues 137 to 181 (KGRLGLDARPMMASMWISCFVRMPRVQLAFRFMGPEDAGRTRRIL) are interaction with NEC1. A helical transmembrane segment spans residues 252-272 (ALVLAAGLVLGAAIWWVVGAG). At 273-275 (ARL) the chain is on the nuclear side.

The protein belongs to the herpesviridae NEC2 protein family. In terms of assembly, forms a heterohexameric complex with NEC1. Interacts with glycoprotein D; this interaction recruits glycoprotein D and glycoprotein M to the inner nuclear membrane. In terms of processing, phosphorylated by viral kinase US3.

It is found in the host nucleus inner membrane. Plays an essential role in virion nuclear egress, the first step of virion release from infected cell. Within the host nucleus, NEC1 interacts with the newly formed capsid through the vertexes and directs it to the inner nuclear membrane by associating with NEC2. Induces the budding of the capsid at the inner nuclear membrane as well as its envelopment into the perinuclear space. There, the NEC1/NEC2 complex promotes the fusion of the enveloped capsid with the outer nuclear membrane and the subsequent release of the viral capsid into the cytoplasm where it will reach the secondary budding sites in the host Golgi or trans-Golgi network. This is Nuclear egress protein 2 from Homo sapiens (Human).